The sequence spans 240 residues: UDP-2,3-diacylglucosamine hydrolase (240 aa).

Residues Asp8, His10, Asp41, Asn79, and His114 each contribute to the Mn(2+) site. Residue 79–80 (NR) coordinates substrate. Substrate is bound by residues Asp122, Ser160, Asn164, Lys167, and His195. Mn(2+)-binding residues include His195 and His197.

This sequence belongs to the LpxH family. Requires Mn(2+) as cofactor.

It is found in the cell inner membrane. It catalyses the reaction UDP-2-N,3-O-bis[(3R)-3-hydroxytetradecanoyl]-alpha-D-glucosamine + H2O = 2-N,3-O-bis[(3R)-3-hydroxytetradecanoyl]-alpha-D-glucosaminyl 1-phosphate + UMP + 2 H(+). Its pathway is glycolipid biosynthesis; lipid IV(A) biosynthesis; lipid IV(A) from (3R)-3-hydroxytetradecanoyl-[acyl-carrier-protein] and UDP-N-acetyl-alpha-D-glucosamine: step 4/6. Its function is as follows. Hydrolyzes the pyrophosphate bond of UDP-2,3-diacylglucosamine to yield 2,3-diacylglucosamine 1-phosphate (lipid X) and UMP by catalyzing the attack of water at the alpha-P atom. Involved in the biosynthesis of lipid A, a phosphorylated glycolipid that anchors the lipopolysaccharide to the outer membrane of the cell. In Shigella boydii serotype 18 (strain CDC 3083-94 / BS512), this protein is UDP-2,3-diacylglucosamine hydrolase.